A 1508-amino-acid chain; its full sequence is ABC-type transporter oblD (1508 aa).

2 disordered regions span residues 1 to 35 and 54 to 82; these read MSLG…LTNN and KYTQ…PNGG. The segment covering 11 to 24 has biased composition (polar residues); sequence TPNSVMPSDASLHN. Asn24 and Asn35 each carry an N-linked (GlcNAc...) asparagine glycan. Positions 55–68 are enriched in polar residues; that stretch reads YTQNSVYSTTSQNP. N-linked (GlcNAc...) asparagine glycans are attached at residues Asn83, Asn231, and Asn314. In terms of domain architecture, ABC transporter 1 spans 136-390; sequence LEAVGLVRKL…FLNMGFVCPD (255 aa). 5 helical membrane passes run 501 to 521, 536 to 556, 610 to 630, 643 to 663, and 752 to 772; these read ITIS…SMFF, LLFF…LTLY, GNFF…SMFF, ALPF…FTIP, and GIIF…SDFI. The ABC transporter 2 domain maps to 828–1070; sequence FQWKDICYDI…ILIDYFTRNG (243 aa). Position 864–871 (864–871) interacts with ATP; the sequence is GVSGAGKT. Helical transmembrane passes span 1172-1192, 1206-1226, 1296-1316, and 1322-1342; these read YIYS…FSLY, FAIF…MPHF, LFVW…IAAL, and AGNM…ILTT. N-linked (GlcNAc...) asparagine glycosylation occurs at Asn1390. A helical transmembrane segment spans residues 1443 to 1463; the sequence is FGLMWVFVVFNAFAACGLYYW.

Belongs to the ABC transporter superfamily. ABCG family. PDR (TC 3.A.1.205) subfamily.

Its subcellular location is the cell membrane. ABC-type transporter; part of the gene cluster that mediates the biosynthesis of the sesterterpenes ophiobolins, fungal phytotoxins with potential anti-cancer activities. Acts as a specific transporter involved in ophiobolins secretion. This chain is ABC-type transporter oblD, found in Cochliobolus heterostrophus (strain C5 / ATCC 48332 / race O) (Southern corn leaf blight fungus).